Here is a 470-residue protein sequence, read N- to C-terminus: Argininosuccinate lyase (470 aa).

The protein belongs to the lyase 1 family. Argininosuccinate lyase subfamily.

The protein resides in the cytoplasm. The enzyme catalyses 2-(N(omega)-L-arginino)succinate = fumarate + L-arginine. It functions in the pathway amino-acid biosynthesis; L-arginine biosynthesis; L-arginine from L-ornithine and carbamoyl phosphate: step 3/3. In Mycobacterium marinum (strain ATCC BAA-535 / M), this protein is Argininosuccinate lyase.